Reading from the N-terminus, the 498-residue chain is Lysine--tRNA ligase (498 aa).

2 residues coordinate Mg(2+): Glu409 and Glu416.

The protein belongs to the class-II aminoacyl-tRNA synthetase family. As to quaternary structure, homodimer. Requires Mg(2+) as cofactor.

The protein resides in the cytoplasm. It catalyses the reaction tRNA(Lys) + L-lysine + ATP = L-lysyl-tRNA(Lys) + AMP + diphosphate. This chain is Lysine--tRNA ligase, found in Coxiella burnetii (strain CbuK_Q154) (Coxiella burnetii (strain Q154)).